We begin with the raw amino-acid sequence, 288 residues long: MSNLCRNIKVFFKVFLYRFKQNKLNQAAGYLTYSTTLALVPLIMVFFSVFAAFPVFNEITGELKQFIFTNFAPSTGDAVGEYIDQFVNNSKQMSAVGIISLIVVALMLIHSIDRTLNSIWLDTSVRPAIFSFAIYWLILTLGPIVIATSIGISTYVTKFATYTFEQDFGLSVGIKLLSLMPFFLTWFIFTVLYMVVPNKKVSIIHSAAGALIAAVFFTLGKQAFTWYITTFPSYQLIYGAMATLPIMLLWIQLSWTAVLLGAQLSAVLADIRSLDCGNIQIEKIKEEK.

The next 6 helical transmembrane spans lie at Thr-36–Phe-56, Gln-92–Ile-112, Pro-127–Ala-147, Leu-176–Val-196, Lys-200–Gly-220, and Ala-240–Leu-260.

Belongs to the UPF0761 family.

The protein localises to the cell inner membrane. This Histophilus somni (strain 129Pt) (Haemophilus somnus) protein is UPF0761 membrane protein HS_0693.